The primary structure comprises 214 residues: MPQATMIFPILFTFFLLLSSSNAAVQDFCVADLAAPEGPAGFSCKKPASVKVNDFVFSGLGIAGNTSNIIKAAVTPAFVAQFPGVNGLGISIARLDLAVGGVVPFHTHPGASEVLIVAQGTICAGFVASDNTPYLQTLEKGDIMVFPQGLLHFQVNGGEAPALAFASFGSASPGLQILDFALFKNDLPTEVIAQTTFLDAAQIKKLKGVLGGTN.

The N-terminal stretch at Met1–Ala23 is a signal peptide. Cys29 and Cys44 are joined by a disulfide. One can recognise a Cupin type-1 domain in the interval Ser58–Lys204. Residue Asn65 is glycosylated (N-linked (GlcNAc...) asparagine). Residues His106, His108, Glu113, and His152 each coordinate Mn(2+).

Belongs to the germin family. Interacts with ABP19.

Its subcellular location is the secreted. It is found in the extracellular space. The protein resides in the apoplast. It localises to the cell wall. Probable receptor for the plant growth-promoting hormone auxin. This Prunus persica (Peach) protein is Auxin-binding protein ABP20 (ABP20).